The following is a 313-amino-acid chain: Transcription initiation factor IIB 2 (313 aa).

The segment at 13–44 (APKRCPECHSEHLIRDYEHGELICADCGAVIE) adopts a TFIIB-type zinc-finger fold. Zn(2+) contacts are provided by Cys-17, Cys-20, Cys-36, and Cys-39. 2 tandem repeats follow at residues 130–213 (QLLN…AKEL) and 224–305 (SYIA…EISK).

Belongs to the TFIIB family.

Stabilizes TBP binding to an archaeal box-A promoter. Also responsible for recruiting RNA polymerase II to the pre-initiation complex (DNA-TBP-TFIIB). The polypeptide is Transcription initiation factor IIB 2 (Thermoplasma volcanium (strain ATCC 51530 / DSM 4299 / JCM 9571 / NBRC 15438 / GSS1)).